A 457-amino-acid chain; its full sequence is GTPase Der (457 aa).

EngA-type G domains follow at residues 4-169 (PTIA…PENN) and 177-352 (IMMS…NQHR). Residues 10–17 (GRPNVGKS), 57–61 (DTGGL), 120–123 (NKCE), 183–190 (GRPNVGKS), 230–234 (DTAGI), and 295–298 (NKWD) contribute to the GTP site. Residues 353–438 (RRVTTSVVNE…PLILLWRGKQ (86 aa)) form the KH-like domain.

The protein belongs to the TRAFAC class TrmE-Era-EngA-EngB-Septin-like GTPase superfamily. EngA (Der) GTPase family. In terms of assembly, associates with the 50S ribosomal subunit.

Functionally, GTPase that plays an essential role in the late steps of ribosome biogenesis. The protein is GTPase Der of Prochlorococcus marinus (strain MIT 9215).